Reading from the N-terminus, the 177-residue chain is CASP-like protein 5A2 (177 aa).

Residues 1 to 36 (MNASHPAVHPVGVPPAVAGQLPPRMRMKEIQGMPGT) are Cytoplasmic-facing. The helical transmembrane segment at 37–57 (IGGLLLRLGQFCFALVAFSIM) threads the bilayer. The Extracellular segment spans residues 58–68 (VSIENFSTVTA). Asn-62 carries N-linked (GlcNAc...) asparagine glycosylation. A helical membrane pass occupies residues 69–89 (FCYLVAATVLQCLWSLALAII). Residues 90 to 103 (DGYALLVKRSLRNS) lie on the Cytoplasmic side of the membrane. A helical membrane pass occupies residues 104-124 (LLVSLLVVGDGVTATLTFAAA). Residues 125-153 (CASAGITVLIGNDLRQCKENHCARYETAT) lie on the Extracellular side of the membrane. Residues 154 to 174 (ALAFLSWFMVSLSFILTFWLL) traverse the membrane as a helical segment. Over 175–177 (ATR) the chain is Cytoplasmic.

The protein belongs to the Casparian strip membrane proteins (CASP) family. As to quaternary structure, homodimer and heterodimers.

The protein resides in the cell membrane. This Ginkgo biloba (Ginkgo) protein is CASP-like protein 5A2.